Consider the following 366-residue polypeptide: Phospho-N-acetylmuramoyl-pentapeptide-transferase (366 aa).

10 helical membrane-spanning segments follow: residues 3–23, 52–72, 80–100, 120–140, 161–181, 197–217, 238–258, 262–282, 287–307, and 341–361; these read QIII…PVLI, MGGI…GIVG, LTAS…LGFA, LIGQ…FPNA, LAIG…YILI, LAAG…FWQF, LAIL…WNAA, IFMG…LSVA, LLMI…VIQV, and FWLI…GEWL.

This sequence belongs to the glycosyltransferase 4 family. MraY subfamily. Mg(2+) is required as a cofactor.

It is found in the cell membrane. The enzyme catalyses UDP-N-acetyl-alpha-D-muramoyl-L-alanyl-gamma-D-glutamyl-meso-2,6-diaminopimeloyl-D-alanyl-D-alanine + di-trans,octa-cis-undecaprenyl phosphate = di-trans,octa-cis-undecaprenyl diphospho-N-acetyl-alpha-D-muramoyl-L-alanyl-D-glutamyl-meso-2,6-diaminopimeloyl-D-alanyl-D-alanine + UMP. Its pathway is cell wall biogenesis; peptidoglycan biosynthesis. Its function is as follows. Catalyzes the initial step of the lipid cycle reactions in the biosynthesis of the cell wall peptidoglycan: transfers peptidoglycan precursor phospho-MurNAc-pentapeptide from UDP-MurNAc-pentapeptide onto the lipid carrier undecaprenyl phosphate, yielding undecaprenyl-pyrophosphoryl-MurNAc-pentapeptide, known as lipid I. This Corynebacterium diphtheriae (strain ATCC 700971 / NCTC 13129 / Biotype gravis) protein is Phospho-N-acetylmuramoyl-pentapeptide-transferase.